The following is a 480-amino-acid chain: Siroheme synthase 1 (480 aa).

Positions 1–203 (MNYLPIFADL…GQLEQAEGEL (203 aa)) are precorrin-2 dehydrogenase /sirohydrochlorin ferrochelatase. NAD(+) contacts are provided by residues 22–23 (EV) and 43–44 (LA). S128 bears the Phosphoserine mark. Residues 222–480 (GEVALVGAGP…DSRPAVVNLA (259 aa)) form a uroporphyrinogen-III C-methyltransferase region. P231 serves as a coordination point for S-adenosyl-L-methionine. D254 acts as the Proton acceptor in catalysis. The active-site Proton donor is K276. Residues 307–309 (GGD), I312, 337–338 (TA), M389, and G418 each bind S-adenosyl-L-methionine.

This sequence in the N-terminal section; belongs to the precorrin-2 dehydrogenase / sirohydrochlorin ferrochelatase family. The protein in the C-terminal section; belongs to the precorrin methyltransferase family.

It catalyses the reaction uroporphyrinogen III + 2 S-adenosyl-L-methionine = precorrin-2 + 2 S-adenosyl-L-homocysteine + H(+). The catalysed reaction is precorrin-2 + NAD(+) = sirohydrochlorin + NADH + 2 H(+). The enzyme catalyses siroheme + 2 H(+) = sirohydrochlorin + Fe(2+). Its pathway is cofactor biosynthesis; adenosylcobalamin biosynthesis; precorrin-2 from uroporphyrinogen III: step 1/1. The protein operates within cofactor biosynthesis; adenosylcobalamin biosynthesis; sirohydrochlorin from precorrin-2: step 1/1. It participates in porphyrin-containing compound metabolism; siroheme biosynthesis; precorrin-2 from uroporphyrinogen III: step 1/1. It functions in the pathway porphyrin-containing compound metabolism; siroheme biosynthesis; siroheme from sirohydrochlorin: step 1/1. Its pathway is porphyrin-containing compound metabolism; siroheme biosynthesis; sirohydrochlorin from precorrin-2: step 1/1. In terms of biological role, multifunctional enzyme that catalyzes the SAM-dependent methylations of uroporphyrinogen III at position C-2 and C-7 to form precorrin-2 via precorrin-1. Then it catalyzes the NAD-dependent ring dehydrogenation of precorrin-2 to yield sirohydrochlorin. Finally, it catalyzes the ferrochelation of sirohydrochlorin to yield siroheme. This Pectobacterium atrosepticum (strain SCRI 1043 / ATCC BAA-672) (Erwinia carotovora subsp. atroseptica) protein is Siroheme synthase 1.